We begin with the raw amino-acid sequence, 261 residues long: Basic leucine zipper 19 (261 aa).

2 disordered regions span residues 1–22 and 74–100; these read MEDG…MGEL and ESDE…LGNR. Residues 8 to 18 show a composition bias toward polar residues; the sequence is FSNQEVFSSSE. Residues 88–100 show a composition bias toward basic and acidic residues; that stretch reads CGKKGEKRPLGNR. Residues 89–155 form the bZIP domain; it reads GKKGEKRPLG…SRLKCLLVDL (67 aa). The interval 90-113 is basic motif; it reads KKGEKRPLGNREAVRKYREKKKAK. The tract at residues 117–131 is leucine-zipper; that stretch reads LEDEVARLRAVNQQL. A compositionally biased stretch (low complexity) spans 237-248; it reads NGSFSNVNTSVS. The disordered stretch occupies residues 237–261; sequence NGSFSNVNTSVSNKRKGGHRASRAV. Residues 249-261 are compositionally biased toward basic residues; the sequence is NKRKGGHRASRAV.

It is found in the nucleus. Its function is as follows. Transcription factor involved in the response to zinc ion deficiency. Binds to the consensus sequence 5'-[AG]TGTCGACA[CT]-3' also called zinc deficiency response element (ZDRE). The ZDRE sequence is conserved in the plant kingdom and present in the promoters of genes that constitute the primary response to zinc deficiency, comprising additional ZIP metal transporter genes. Required for zinc accumulation in roots. Mediates the expression of the zinc transporters ZIP3, ZIP4, ZIP5 and ZIP9 during growth in zinc-deficient conditions. ZIP9 transporter is involved in zinc uptake in roots. In Arabidopsis thaliana (Mouse-ear cress), this protein is Basic leucine zipper 19.